The sequence spans 213 residues: Uridine kinase (213 aa).

Residue 13–20 participates in ATP binding; that stretch reads GASASGKS.

It belongs to the uridine kinase family.

Its subcellular location is the cytoplasm. It catalyses the reaction uridine + ATP = UMP + ADP + H(+). The enzyme catalyses cytidine + ATP = CMP + ADP + H(+). The protein operates within pyrimidine metabolism; CTP biosynthesis via salvage pathway; CTP from cytidine: step 1/3. It functions in the pathway pyrimidine metabolism; UMP biosynthesis via salvage pathway; UMP from uridine: step 1/1. The polypeptide is Uridine kinase (Haemophilus influenzae (strain PittGG)).